The chain runs to 589 residues: Probable 9-cis-epoxycarotenoid dioxygenase NCED5, chloroplastic (589 aa).

A chloroplast-targeting transit peptide spans 1–45 (MACSYILTPNPTKLNLSFAPSDLDAPSPSSSVSFTNTKPRRRKLS). The segment covering 21 to 34 (SDLDAPSPSSSVSF) has biased composition (low complexity). The disordered stretch occupies residues 21–51 (SDLDAPSPSSSVSFTNTKPRRRKLSANSVSD). Fe cation is bound by residues histidine 287, histidine 336, histidine 401, and histidine 576.

The protein belongs to the carotenoid oxygenase family. Interacts in vitro with VAR3. Fe(2+) serves as cofactor. As to expression, detected only in seeds.

It localises to the plastid. It is found in the chloroplast thylakoid membrane. It catalyses the reaction a 9-cis-epoxycarotenoid + O2 = a 12'-apo-carotenal + 2-cis,4-trans-xanthoxin. It carries out the reaction 9-cis-violaxanthin + O2 = (3S,5R,6S)-5,6-epoxy-3-hydroxy-5,6-dihydro-12'-apo-beta-caroten-12'-al + 2-cis,4-trans-xanthoxin. The enzyme catalyses 9'-cis-neoxanthin + O2 = (3S,5R,6R)-3,5-dihydroxy-6,7-didehydro-5,6-dihydro-12'-apo-beta-caroten-12'-al + 2-cis,4-trans-xanthoxin. Functionally, has a 11,12(11',12') 9-cis epoxycarotenoid cleavage activity. Catalyzes the first step of abscisic-acid biosynthesis from carotenoids. The protein is Probable 9-cis-epoxycarotenoid dioxygenase NCED5, chloroplastic (NCED5) of Arabidopsis thaliana (Mouse-ear cress).